The primary structure comprises 156 residues: Transcriptional repressor NrdR (156 aa).

A zinc finger spans residues 3–34 (CPKCNSTHSRVVDSRHADEVNAIRRRRECEEC). An ATP-cone domain is found at 49-139 (LIVVKKDGTR…VYKEFKDVDQ (91 aa)).

It belongs to the NrdR family. Zn(2+) is required as a cofactor.

Negatively regulates transcription of bacterial ribonucleotide reductase nrd genes and operons by binding to NrdR-boxes. In Staphylococcus saprophyticus subsp. saprophyticus (strain ATCC 15305 / DSM 20229 / NCIMB 8711 / NCTC 7292 / S-41), this protein is Transcriptional repressor NrdR.